The following is a 360-amino-acid chain: Photosystem II protein D1 (360 aa).

3 helical membrane passes run 32–49 (YLGW…SATF), 121–136 (HFFI…EWEL), and 145–159 (WIFV…AASA). His-121 lines the chlorophyll a pocket. Tyr-129 serves as a coordination point for pheophytin a. Asp-173 and Glu-192 together coordinate [CaMn4O5] cluster. The chain crosses the membrane as a helical span at residues 200–221 (LHMFGVAAVFGGSLFSAMHGSL). A chlorophyll a-binding site is contributed by His-201. Residues His-218 and 267–268 (SF) each bind a quinone. His-218 contributes to the Fe cation binding site. Residue His-275 coordinates Fe cation. A helical transmembrane segment spans residues 277–291 (FLGAWPVVGIWLTAM). His-335, Glu-336, Asp-345, and Ala-347 together coordinate [CaMn4O5] cluster. Positions 348–360 (CANCLLSLWPMVG) are excised as a propeptide.

The protein belongs to the reaction center PufL/M/PsbA/D family. PSII is composed of 1 copy each of membrane proteins PsbA, PsbB, PsbC, PsbD, PsbE, PsbF, PsbH, PsbI, PsbJ, PsbK, PsbL, PsbM, PsbT, PsbX, PsbY, PsbZ, Psb30/Ycf12, at least 3 peripheral proteins of the oxygen-evolving complex and a large number of cofactors. It forms dimeric complexes. The D1/D2 heterodimer binds P680, chlorophylls that are the primary electron donor of PSII, and subsequent electron acceptors. It shares a non-heme iron and each subunit binds pheophytin, quinone, additional chlorophylls, carotenoids and lipids. D1 provides most of the ligands for the Mn4-Ca-O5 cluster of the oxygen-evolving complex (OEC). There is also a Cl(-1) ion associated with D1 and D2, which is required for oxygen evolution. The PSII complex binds additional chlorophylls, carotenoids and specific lipids. serves as cofactor. In terms of processing, tyr-164 forms a radical intermediate that is referred to as redox-active TyrZ, YZ or Y-Z. C-terminally processed by CtpA; processing is essential to allow assembly of the oxygen-evolving complex and thus photosynthetic growth.

It localises to the plastid. It is found in the chloroplast thylakoid membrane. It catalyses the reaction 2 a plastoquinone + 4 hnu + 2 H2O = 2 a plastoquinol + O2. Its function is as follows. Photosystem II (PSII) is a light-driven water:plastoquinone oxidoreductase that uses light energy to abstract electrons from H(2)O, generating O(2) and a proton gradient subsequently used for ATP formation. It consists of a core antenna complex that captures photons, and an electron transfer chain that converts photonic excitation into a charge separation. The D1/D2 (PsbA/PsbD) reaction center heterodimer binds P680, the primary electron donor of PSII as well as several subsequent electron acceptors. The chain is Photosystem II protein D1 from Karenia mikimotoi (Red tide dinoflagellate).